The sequence spans 195 residues: Protein GrpE (195 aa).

It belongs to the GrpE family. In terms of assembly, homodimer.

It localises to the cytoplasm. In terms of biological role, participates actively in the response to hyperosmotic and heat shock by preventing the aggregation of stress-denatured proteins, in association with DnaK and GrpE. It is the nucleotide exchange factor for DnaK and may function as a thermosensor. Unfolded proteins bind initially to DnaJ; upon interaction with the DnaJ-bound protein, DnaK hydrolyzes its bound ATP, resulting in the formation of a stable complex. GrpE releases ADP from DnaK; ATP binding to DnaK triggers the release of the substrate protein, thus completing the reaction cycle. Several rounds of ATP-dependent interactions between DnaJ, DnaK and GrpE are required for fully efficient folding. The chain is Protein GrpE from Francisella tularensis subsp. tularensis (strain FSC 198).